Here is a 433-residue protein sequence, read N- to C-terminus: AP-2 complex subunit mu (433 aa).

Residues 168–432 (RNELFLDVLE…IGRSGIYETR (265 aa)) form the MHD domain. Positions 339, 343, and 352 each coordinate a 1,2-diacyl-sn-glycero-3-phospho-(1D-myo-inositol-3,4,5-trisphosphate).

It belongs to the adaptor complexes medium subunit family. In terms of assembly, adaptor protein complex 2 (AP-2) is a heterotetramer composed of two large adaptins (alpha-type subunit and beta-type subunit), a medium adaptin (mu-type subunit) and a small adaptin (sigma-type subunit).

Its subcellular location is the cell membrane. The protein localises to the membrane. It localises to the coated pit. Component of the adaptor complexes which link clathrin to receptors in coated vesicles. Clathrin-associated protein complexes are believed to interact with the cytoplasmic tails of membrane proteins, leading to their selection and concentration. AP50 is a subunit of the plasma membrane adaptor. The complex binds polyphosphoinositide-containing lipids. This is AP-2 complex subunit mu (AP2M1) from Gallus gallus (Chicken).